The following is a 941-amino-acid chain: MAEFEERPRLSIGEEEAPPYPLEKLTGGRRTRAQIHALHQQAGRVPPQAVELEQAVLGAMLIEPEAIPRALEILTPEAFYDGRHQRIFRAIVRLFEQNRGVDLLTVTEELRRTGELEQAGDTIYLSELTTRVASAANVEYHARIIAEKLLRRMIEVMTLLVGRAYDPAADAFELLDEVEAEIFRLSDVHLRKAARSMNEVVKETLERLEAIHGRPGGITGVPSGFHQLDALTGGWQRGDLIIIAARPSMGKTAFALSCRNAALHPHYGTGVAIFSLEMGAEQLAQRLLTAEAASMPRRPAPDGCATRTGVSWPARRPLSDAPIFIDDTPSLGVLELRAKCRRLKAEHDIGLVIVDYLQLMQASHMPRNANREQEIAQISRSLKALAKELNVPVVALSQLSRAVETRGGDKRPQLSDLRESGCLAGDTLITLADGRRVPIRELVSQQNFSVWALNPQTYRLERARVSRAFCTGIKPVYRLTTRLGRSIRATANHRFLTPQGWKRVDELQPGDYLALPRRIPTASTPTLTEAELALLGHLIGDGCTLPHHVIQYTSRDADLATLVAHLATKVFGSKVTPQIRKELRWYQVYLRAARPLAPGKRNPISDWLRDLGIFGLRSYEKKVPALLFCQTSEAIATFLRHLWATDGCIQMRRGKKPYPAVYYATSSYQLARDVQSLLLRLGINARLKTVAQGEKGRVQYHVKVSGREDLLRFVEKIGAVGARQRAALASVYDYLSVRTGNPNRDIIPVALWYELVREAMYQRGISHRQLHANLGMAYGGMTLFRQNLSRARALRLAEAAACPELRQLAQSDVYWDPIVSIEPDGVEEVFDLTVPGPHNFVANDIIAHNSIEQDADVVLFIYRPERYGITVDENGNPTEGIAEIIIGKQRNGPTGTVRLAFINQYARFENLTMYQPEPGTPLPETPDETILPSGPPDEAPF.

A disordered region spans residues 1-25 (MAEFEERPRLSIGEEEAPPYPLEKL). One can recognise an SF4 helicase; first part domain in the interval 214-484 (RPGGITGVPS…PVYRLTTRLG (271 aa)). ATP is bound at residue 245–252 (ARPSMGKT). The DOD-type homing endonuclease domain occupies 534–683 (LLGHLIGDGC…VQSLLLRLGI (150 aa)). The SF4 helicase; second part domain maps to 646 to 915 (DGCIQMRRGK…ARFENLTMYQ (270 aa)). The tract at residues 914–941 (YQPEPGTPLPETPDETILPSGPPDEAPF) is disordered.

It belongs to the helicase family. DnaB subfamily. Homohexamer. Upon expression in E.coli this protein undergoes self splicing that involves a post-translational excision of the intervening region (intein) followed by peptide ligation.

It catalyses the reaction Couples ATP hydrolysis with the unwinding of duplex DNA at the replication fork by translocating in the 5'-3' direction. This creates two antiparallel DNA single strands (ssDNA). The leading ssDNA polymer is the template for DNA polymerase III holoenzyme which synthesizes a continuous strand.. It carries out the reaction ATP + H2O = ADP + phosphate + H(+). Its function is as follows. The main replicative DNA helicase, it participates in initiation and elongation during chromosome replication. Travels ahead of the DNA replisome, separating dsDNA into templates for DNA synthesis. A processive ATP-dependent 5'-3' DNA helicase it has DNA-dependent ATPase activity. Functionally, the intein is an endonuclease. This is Replicative DNA helicase DnaB from Rhodothermus marinus (Rhodothermus obamensis).